We begin with the raw amino-acid sequence, 323 residues long: Serine/threonine-protein phosphatase PP1 (323 aa).

4 residues coordinate Mn(2+): aspartate 63, histidine 65, aspartate 91, and asparagine 123. Residue histidine 124 is the Proton donor of the active site. Mn(2+) contacts are provided by histidine 172 and histidine 247.

This sequence belongs to the PPP phosphatase family. PP-1 subfamily. It depends on Mn(2+) as a cofactor.

It catalyses the reaction O-phospho-L-seryl-[protein] + H2O = L-seryl-[protein] + phosphate. The enzyme catalyses O-phospho-L-threonyl-[protein] + H2O = L-threonyl-[protein] + phosphate. Plays an important role in the control of mitosis by reversing the action of the nimA kinase. The chain is Serine/threonine-protein phosphatase PP1 (bimG) from Emericella nidulans (strain FGSC A4 / ATCC 38163 / CBS 112.46 / NRRL 194 / M139) (Aspergillus nidulans).